A 538-amino-acid polypeptide reads, in one-letter code: Aldehyde dehydrogenase family 2 member B4, mitochondrial (538 aa).

The N-terminal 38 residues, 1–38 (MAARRVSSLLSRSFSASSPLLFRSQGRNCYNGGILRRF), are a transit peptide targeting the mitochondrion. 282–287 (GSTDTG) is an NAD(+) binding site. The Proton acceptor role is filled by Glu-305. The Nucleophile role is filled by Cys-339.

Belongs to the aldehyde dehydrogenase family. Homotetramer.

It localises to the mitochondrion matrix. The enzyme catalyses an aldehyde + NAD(+) + H2O = a carboxylate + NADH + 2 H(+). Functionally, possesses activity on acetaldehyde and glycolaldehyde in vitro. The sequence is that of Aldehyde dehydrogenase family 2 member B4, mitochondrial (ALDH2B4) from Arabidopsis thaliana (Mouse-ear cress).